A 165-amino-acid polypeptide reads, in one-letter code: MYIEMVDETGQVSKEMLQQTQEILEFAAQKLGKEDKEMAVTFVTNERSHELNLEYRDTDRPTDVISLEYKPELEIAFDEEDLLENPELAEMMSEFDAYIGELFISIDKAHEQAEEYGHSFEREMGFLAVHGFLHINGYDHYTPEEEAEMFGLQEEILTAYGLTRQ.

Zn(2+) contacts are provided by histidine 130, histidine 134, and histidine 140.

Belongs to the endoribonuclease YbeY family. Requires Zn(2+) as cofactor.

The protein localises to the cytoplasm. In terms of biological role, single strand-specific metallo-endoribonuclease involved in late-stage 70S ribosome quality control and in maturation of the 3' terminus of the 16S rRNA. The sequence is that of Endoribonuclease YbeY from Streptococcus pneumoniae serotype 2 (strain D39 / NCTC 7466).